Reading from the N-terminus, the 222-residue chain is RNA-binding protein KhpB (222 aa).

Residues 2-51 form a jag_N domain region; sequence DMVTVTAKTVEEAVTKALIELQTTSDKLTYEIVEKGSAGFLGIGSKPAII. One can recognise a KH domain in the interval 54 to 133; sequence KRKETLQDKA…KSSSDYIRVK (80 aa). In terms of domain architecture, R3H spans 138 to 204; it reads NYRERRKETL…EEPFRHVIIS (67 aa).

It belongs to the KhpB RNA-binding protein family. Forms a complex with KhpA. Homodimer or homotrimer.

It localises to the cytoplasm. A probable RNA chaperone. Forms a complex with KhpA which binds to cellular RNA and controls its expression. Plays a role in peptidoglycan (PG) homeostasis and cell length regulation. This Clostridium symbiosum (Bacteroides symbiosus) protein is RNA-binding protein KhpB.